The primary structure comprises 297 residues: MATNLRGVMAALLTPFDQQQALDKASLRRLVQFNIQQGIDGLYVGGSTGEAFVQSLSEREQVLEIVAEEAKGKIKLIAHVGCVSTAESQQLAASAKRYGFDAVSAVTPFYYPFSFEEHCDHYRAIIDSADGLPMVVYNIPALSGVKLSLDQINTLVTLPGVGALKQTSGDLYQMEQIRREHPDLVLYNGYDEIFASGLLAGADGGIGSTYNIMGWRYQGIVKALKEGDIQTAQKLQTECNKVIDLLIKTGVFRGLKTVLHYMDVVSVPLCRKPFGPVDEKYLPELKALAQQLMQERG.

Aceneuramate is bound by residues Ser-47 and Thr-48. Catalysis depends on Tyr-137, which acts as the Proton donor. Lys-165 acts as the Schiff-base intermediate with substrate in catalysis. Aceneuramate-binding residues include Thr-167, Gly-189, Asp-191, Glu-192, and Ser-208.

It belongs to the DapA family. NanA subfamily. In terms of assembly, homotetramer.

It localises to the cytoplasm. It catalyses the reaction aceneuramate = aldehydo-N-acetyl-D-mannosamine + pyruvate. It participates in amino-sugar metabolism; N-acetylneuraminate degradation; D-fructose 6-phosphate from N-acetylneuraminate: step 1/5. Catalyzes the reversible aldol cleavage of N-acetylneuraminic acid (sialic acid; Neu5Ac) to form pyruvate and N-acetylmannosamine (ManNAc) via a Schiff base intermediate. The sequence is that of N-acetylneuraminate lyase from Escherichia coli (strain SMS-3-5 / SECEC).